A 556-amino-acid polypeptide reads, in one-letter code: Formate--tetrahydrofolate ligase (556 aa).

Residue 65-72 coordinates ATP; the sequence is TPAGEGKS.

Belongs to the formate--tetrahydrofolate ligase family.

The enzyme catalyses (6S)-5,6,7,8-tetrahydrofolate + formate + ATP = (6R)-10-formyltetrahydrofolate + ADP + phosphate. It participates in one-carbon metabolism; tetrahydrofolate interconversion. This is Formate--tetrahydrofolate ligase from Streptococcus agalactiae serotype Ia (strain ATCC 27591 / A909 / CDC SS700).